Reading from the N-terminus, the 524-residue chain is 2-isopropylmalate synthase (524 aa).

Residues 12–274 form the Pyruvate carboxyltransferase domain; that stretch reads VIIFDTTLRD…WNRIETTMLT (263 aa). Residues Asp21, His209, His211, and Asn245 each coordinate Mn(2+). Positions 398-524 are regulatory domain; the sequence is KLMSLTVIAG…EDAPTVAVAG (127 aa).

Belongs to the alpha-IPM synthase/homocitrate synthase family. LeuA type 1 subfamily. As to quaternary structure, homodimer. The cofactor is Mn(2+).

The protein localises to the cytoplasm. The enzyme catalyses 3-methyl-2-oxobutanoate + acetyl-CoA + H2O = (2S)-2-isopropylmalate + CoA + H(+). The protein operates within amino-acid biosynthesis; L-leucine biosynthesis; L-leucine from 3-methyl-2-oxobutanoate: step 1/4. Catalyzes the condensation of the acetyl group of acetyl-CoA with 3-methyl-2-oxobutanoate (2-ketoisovalerate) to form 3-carboxy-3-hydroxy-4-methylpentanoate (2-isopropylmalate). The protein is 2-isopropylmalate synthase of Rhodopseudomonas palustris (strain TIE-1).